Reading from the N-terminus, the 272-residue chain is 3-methyl-2-oxobutanoate hydroxymethyltransferase (272 aa).

Mg(2+) is bound by residues Asp-50 and Asp-89. 3-methyl-2-oxobutanoate is bound by residues 50–51, Asp-89, and Lys-119; that span reads DS. Glu-121 serves as a coordination point for Mg(2+). Glu-188 functions as the Proton acceptor in the catalytic mechanism.

Belongs to the PanB family. Homodecamer; pentamer of dimers. Mg(2+) serves as cofactor.

It is found in the cytoplasm. It carries out the reaction 3-methyl-2-oxobutanoate + (6R)-5,10-methylene-5,6,7,8-tetrahydrofolate + H2O = 2-dehydropantoate + (6S)-5,6,7,8-tetrahydrofolate. The protein operates within cofactor biosynthesis; (R)-pantothenate biosynthesis; (R)-pantoate from 3-methyl-2-oxobutanoate: step 1/2. Its function is as follows. Catalyzes the reversible reaction in which hydroxymethyl group from 5,10-methylenetetrahydrofolate is transferred onto alpha-ketoisovalerate to form ketopantoate. In Methylobacterium radiotolerans (strain ATCC 27329 / DSM 1819 / JCM 2831 / NBRC 15690 / NCIMB 10815 / 0-1), this protein is 3-methyl-2-oxobutanoate hydroxymethyltransferase.